A 316-amino-acid chain; its full sequence is Homoserine kinase (316 aa).

97–107 (PPARGLGSSAS) is an ATP binding site.

The protein belongs to the GHMP kinase family. Homoserine kinase subfamily.

The protein resides in the cytoplasm. The catalysed reaction is L-homoserine + ATP = O-phospho-L-homoserine + ADP + H(+). It functions in the pathway amino-acid biosynthesis; L-threonine biosynthesis; L-threonine from L-aspartate: step 4/5. Functionally, catalyzes the ATP-dependent phosphorylation of L-homoserine to L-homoserine phosphate. This chain is Homoserine kinase, found in Prochlorococcus marinus (strain MIT 9313).